We begin with the raw amino-acid sequence, 159 residues long: Membrane protein FAM174B (159 aa).

The N-terminal stretch at 1 to 27 (MRAALPPARLLPLLLLLALLGAPAARA) is a signal peptide. Residues 28–73 (SRAQSAAPPQPGAERQPRPPPGPGPGNATGTGSGEAAGGGGSSNSS) form a disordered region. The Extracellular segment spans residues 28 to 90 (SRAQSAAPPQ…ISSLLRDLHT (63 aa)). Positions 52-69 (PGNATGTGSGEAAGGGGS) are enriched in gly residues. Asn54 is a glycosylation site (N-linked (GlcNAc...) asparagine). Residues 91–111 (LKAAVIVACAFTAFLIACLLL) traverse the membrane as a helical segment. At 112-159 (RVFRSGKRLKKTRKYDIITTPAERVEMAPLNEEDDEDEDSTVFDIKYR) the chain is on the cytoplasmic side.

This sequence belongs to the FAM174 family.

It is found in the cell membrane. The protein resides in the golgi apparatus. In terms of biological role, essential for Golgi structural integrity. The chain is Membrane protein FAM174B (FAM174B) from Bos taurus (Bovine).